Consider the following 982-residue polypeptide: Presequence protease, mitochondrial (982 aa).

Residues 1 to 7 constitute a mitochondrion transit peptide; sequence MFQIRNY. A Zn(2+)-binding site is contributed by histidine 84. Catalysis depends on glutamate 87, which acts as the Proton acceptor. Histidine 88 lines the Zn(2+) pocket. Residue glutamate 160 is part of the active site. Residue glutamate 185 participates in Zn(2+) binding.

This sequence belongs to the peptidase M16 family. PreP subfamily. In terms of assembly, monomer and homodimer; homodimerization is induced by binding of the substrate. Zn(2+) serves as cofactor.

The protein localises to the mitochondrion intermembrane space. It localises to the mitochondrion matrix. Degrades mitochondrial transit peptides after their cleavage in the intermembrane space or in the matrix, and presequence peptides; clearance of these peptides is required to keep the presequence processing machinery running. Preferentially cleaves the N-terminal side of paired basic amino acid residues. Also degrades other unstructured peptides. May function as an ATP-dependent peptidase as opposed to a metalloendopeptidase. The chain is Presequence protease, mitochondrial (CYM1) from Kluyveromyces lactis (strain ATCC 8585 / CBS 2359 / DSM 70799 / NBRC 1267 / NRRL Y-1140 / WM37) (Yeast).